The chain runs to 134 residues: D-dopachrome decarboxylase-like protein (134 aa).

Belongs to the MIF family.

It is found in the cytoplasm. Functionally, may have lyase activity. The polypeptide is D-dopachrome decarboxylase-like protein (DDTL) (Homo sapiens (Human)).